A 72-amino-acid polypeptide reads, in one-letter code: Protein CYSTEINE-RICH TRANSMEMBRANE MODULE 1 (72 aa).

Polar residues predominate over residues 1-11; that stretch reads MSQYDHNQSAG. The tract at residues 1–46 is disordered; that stretch reads MSQYDHNQSAGANPPPPMSTCTSPPPPIGYPTNQPSHGSVAQGKVE. A compositionally biased stretch (pro residues) spans 13 to 29; sequence NPPPPMSTCTSPPPPIG. A helical transmembrane segment spans residues 49–65; it reads SKGDGFFKGCLAAMCCC.

Belongs to the CYSTM1 family. In terms of assembly, heterodimers. Binds weakly to CYSTM7 and WIH1/CYSTM13. Mostly expressed in roots, flowers and siliques and, to a lower extent, in stems and leaves.

Its subcellular location is the cell membrane. The protein localises to the nucleus. Functionally, may be involved in aluminium (Al) tolerance. Involved in resistance to abiotic stress. This Arabidopsis thaliana (Mouse-ear cress) protein is Protein CYSTEINE-RICH TRANSMEMBRANE MODULE 1.